Consider the following 335-residue polypeptide: SAM pointed domain-containing Ets transcription factor (335 aa).

The segment covering 1–20 has biased composition (low complexity); it reads MGSASPGLSSVSPSHLLLPP. 2 disordered regions span residues 1–25 and 75–100; these read MGSA…TVSR and AKAP…DSQA. The region spanning 129 to 213 is the PNT domain; the sequence is EVLKDIETAC…AHLDIWKSAA (85 aa). Positions 249-332 form a DNA-binding region, ETS; that stretch reads IHLWQFLKEL…ISQRLVYQFV (84 aa).

Belongs to the ETS family. Interacts with the DNA-binding domain of the androgen receptor. Interacts with NKX3-1. In terms of tissue distribution, expressed in a very restricted set of primarily hormone-regulated epithelial tissues with particularly high expression in the prostate gland. Significantly lower expression is seen in other hormone regulated tissues such as mammary gland, salivary gland, and ovary. Expressed in prostate carcinoma cells.

It is found in the nucleus. May function as an androgen-independent transactivator of the prostate-specific antigen (PSA) promoter. Binds to 5'-GGAT-3' DNA sequences. May play a role in the regulation of the prostate gland and/or prostate cancer development. Acts as a transcriptional activator for SERPINB5 promoter. In Homo sapiens (Human), this protein is SAM pointed domain-containing Ets transcription factor (SPDEF).